Here is a 558-residue protein sequence, read N- to C-terminus: MPTDIEIARAATLQPISAIAETLGIPDEALHPYGRHIAKIDHAHIASLEAKPEGKLVLVTAISPTPAGEGKTTTTVGLGDALNRIGKRTVICLREPSLGPCFGMKGGAAGGGRSQVVPMEAINLHFTGDFHAITSAHSLAAALIDNHIYWGNALGIDPRRVAWRRVVDMNDRSLRSIVQSLGGVANGYPREDGFDITVASEVMAVFCLARDLADLEARLGRIVVAESRERKPVTLADLKATGAMTVLLKDALQPNLVQTLEGSPALIHGGPFANIAHGCNSVIATRSGLRLGEYAVTEAGFGADLGAEKFIDIKCRQTGLSPSAVVIVATVRALKMHGGVEKKALGGENVAALEKGFANLQRHVENVRRFGLPVVVAVNHFHADTEAEHAALKALCRDRLDVQAITCRHWAEGGAGAEDLARAVVSLAEGGAPATPNFVYPEEAKLTDKIRTIAQTLYGAADIQVESKAAAKLAQFEKDGYGRLPVCMAKTQYSFSTDPGLIGAPSGHVVAVRDVRLSAGAGFVVVICGEIMTMPGLPKVPASEGIYLDANGQIEGLF.

65-72 contacts ATP; it reads TPAGEGKT.

It belongs to the formate--tetrahydrofolate ligase family.

The enzyme catalyses (6S)-5,6,7,8-tetrahydrofolate + formate + ATP = (6R)-10-formyltetrahydrofolate + ADP + phosphate. Its pathway is one-carbon metabolism; tetrahydrofolate interconversion. In Methylobacterium sp. (strain 4-46), this protein is Formate--tetrahydrofolate ligase.